Here is a 277-residue protein sequence, read N- to C-terminus: NH(3)-dependent NAD(+) synthetase (277 aa).

Position 47 to 54 (47 to 54) interacts with ATP; it reads GISGGQDS. Aspartate 53 is a Mg(2+) binding site. Arginine 141 is a deamido-NAD(+) binding site. Threonine 161 is a binding site for ATP. Position 166 (glutamate 166) interacts with Mg(2+). Positions 174 and 181 each coordinate deamido-NAD(+). ATP contacts are provided by lysine 190 and threonine 212. Residue 261–262 participates in deamido-NAD(+) binding; sequence HK.

This sequence belongs to the NAD synthetase family. Homodimer.

The catalysed reaction is deamido-NAD(+) + NH4(+) + ATP = AMP + diphosphate + NAD(+) + H(+). It functions in the pathway cofactor biosynthesis; NAD(+) biosynthesis; NAD(+) from deamido-NAD(+) (ammonia route): step 1/1. Functionally, catalyzes the ATP-dependent amidation of deamido-NAD to form NAD. Uses ammonia as a nitrogen source. This Lactobacillus gasseri (strain ATCC 33323 / DSM 20243 / BCRC 14619 / CIP 102991 / JCM 1131 / KCTC 3163 / NCIMB 11718 / NCTC 13722 / AM63) protein is NH(3)-dependent NAD(+) synthetase.